A 227-amino-acid polypeptide reads, in one-letter code: ATP phosphoribosyltransferase (227 aa).

This sequence belongs to the ATP phosphoribosyltransferase family. Short subfamily. Heteromultimer composed of HisG and HisZ subunits.

Its subcellular location is the cytoplasm. It carries out the reaction 1-(5-phospho-beta-D-ribosyl)-ATP + diphosphate = 5-phospho-alpha-D-ribose 1-diphosphate + ATP. It functions in the pathway amino-acid biosynthesis; L-histidine biosynthesis; L-histidine from 5-phospho-alpha-D-ribose 1-diphosphate: step 1/9. Functionally, catalyzes the condensation of ATP and 5-phosphoribose 1-diphosphate to form N'-(5'-phosphoribosyl)-ATP (PR-ATP). Has a crucial role in the pathway because the rate of histidine biosynthesis seems to be controlled primarily by regulation of HisG enzymatic activity. In Nitrosospira multiformis (strain ATCC 25196 / NCIMB 11849 / C 71), this protein is ATP phosphoribosyltransferase.